A 721-amino-acid chain; its full sequence is Glucans biosynthesis glucosyltransferase H (721 aa).

6 consecutive transmembrane segments (helical) span residues 52–72 (CSWRRVFVVGFALLISAFAIF), 97–117 (NFCWIALAFSSSIAGFFVLAS), 412–432 (SPFWLLLILSGLLLALQAHFI), 459–479 (FYITMGILFSPKIFGLLLLMF), 505–525 (ALVAPIMMLIHCGAVVSILFG), and 570–590 (LLAWMSPALIGLWFSVPLSGI).

The protein belongs to the glycosyltransferase 2 family. OpgH subfamily.

The protein localises to the cell inner membrane. It participates in glycan metabolism; osmoregulated periplasmic glucan (OPG) biosynthesis. Its function is as follows. Involved in the biosynthesis of osmoregulated periplasmic glucans (OPGs). The protein is Glucans biosynthesis glucosyltransferase H of Vibrio cholerae serotype O1 (strain ATCC 39541 / Classical Ogawa 395 / O395).